Consider the following 309-residue polypeptide: ATP synthase gamma chain (309 aa).

Belongs to the ATPase gamma chain family. F-type ATPases have 2 components, CF(1) - the catalytic core - and CF(0) - the membrane proton channel. CF(1) has five subunits: alpha(3), beta(3), gamma(1), delta(1), epsilon(1). CF(0) has three main subunits: a, b and c.

It is found in the cell membrane. Its function is as follows. Produces ATP from ADP in the presence of a proton gradient across the membrane. The gamma chain is believed to be important in regulating ATPase activity and the flow of protons through the CF(0) complex. This chain is ATP synthase gamma chain, found in Mycolicibacterium gilvum (strain PYR-GCK) (Mycobacterium gilvum (strain PYR-GCK)).